We begin with the raw amino-acid sequence, 201 residues long: Recombination protein RecR (201 aa).

Residues 60–75 (CSVCGNIDTTDPCSIC) form a C4-type zinc finger. The 96-residue stretch at 83 to 178 (GTIIVVEDIS…KITRLAHGVP (96 aa)) folds into the Toprim domain.

This sequence belongs to the RecR family.

May play a role in DNA repair. It seems to be involved in an RecBC-independent recombinational process of DNA repair. It may act with RecF and RecO. The protein is Recombination protein RecR of Bartonella bacilliformis (strain ATCC 35685 / KC583 / Herrer 020/F12,63).